A 499-amino-acid polypeptide reads, in one-letter code: Glycerol kinase (499 aa).

Thr-13 contributes to the ADP binding site. ATP-binding residues include Thr-13, Thr-14, and Ser-15. Position 13 (Thr-13) interacts with sn-glycerol 3-phosphate. Arg-17 lines the ADP pocket. Residues Arg-83, Glu-84, Tyr-135, and Asp-244 each contribute to the sn-glycerol 3-phosphate site. Arg-83, Glu-84, Tyr-135, Asp-244, and Gln-245 together coordinate glycerol. Residues Thr-266 and Gly-310 each coordinate ADP. ATP is bound by residues Thr-266, Gly-310, Gln-314, and Gly-411. Positions 411 and 415 each coordinate ADP.

This sequence belongs to the FGGY kinase family.

The catalysed reaction is glycerol + ATP = sn-glycerol 3-phosphate + ADP + H(+). It participates in polyol metabolism; glycerol degradation via glycerol kinase pathway; sn-glycerol 3-phosphate from glycerol: step 1/1. Its activity is regulated as follows. Inhibited by fructose 1,6-bisphosphate (FBP). Its function is as follows. Key enzyme in the regulation of glycerol uptake and metabolism. Catalyzes the phosphorylation of glycerol to yield sn-glycerol 3-phosphate. This Pseudothermotoga lettingae (strain ATCC BAA-301 / DSM 14385 / NBRC 107922 / TMO) (Thermotoga lettingae) protein is Glycerol kinase.